Consider the following 582-residue polypeptide: Leucine-rich repeat transmembrane neuronal protein 3 (582 aa).

The signal sequence occupies residues 1–30; sequence MGFNVIRLLRGSAVAVVLAPTVLLTMLSSA. Residues 31–61 form the LRRNT domain; it reads ERGCPKGCRCEGKMVYCESQKLQEIPSSISA. Topologically, residues 31–420 are extracellular; the sequence is ERGCPKGCRC…VDTEHISFHK (390 aa). 10 LRR repeats span residues 63–83, 86–107, 110–131, 134–155, 158–179, 182–203, 206–226, 230–251, 254–275, and 279–300; these read CLGL…QFKG, QLTW…AFNG, RLKE…TFRP, NLRN…QFRG, KLLS…IFQD, NLEL…VFAG, RLKE…ALFP, SLQN…MSWT, SLQR…SVFQ, and NLQR…ILDS. N126 carries an N-linked (GlcNAc...) asparagine glycan. The LRRCT domain maps to 312-363; that stretch reads NIWECSRNICSLVNWLRSFKGLRENTIICASPKELQGVNVIDAVKNYSICGK. The N-linked (GlcNAc...) asparagine glycan is linked to N357. The segment at 378 to 410 is disordered; the sequence is KPTFKPKLPRPKHESKPPLPPTVGATEPSPETD. A helical transmembrane segment spans residues 421-441; that stretch reads IIAGSVALFLSVLVILLVMYV. Topologically, residues 442–582 are cytoplasmic; the sequence is SWKRYPASMK…RISDHKPQLA (141 aa).

It belongs to the LRRTM family. As to expression, expressed in neuronal tissues.

It localises to the cell membrane. The protein resides in the postsynaptic cell membrane. Functionally, may play a role in the development and maintenance of the vertebrate nervous system. Exhibits a limited synaptogenic activity in vitro, restricted to excitatory presynaptic differentiation. This Mus musculus (Mouse) protein is Leucine-rich repeat transmembrane neuronal protein 3 (Lrrtm3).